Here is a 283-residue protein sequence, read N- to C-terminus: Bifunctional protein FolD (283 aa).

Residues 159 to 161 (GRS), S184, and I225 contribute to the NADP(+) site.

This sequence belongs to the tetrahydrofolate dehydrogenase/cyclohydrolase family. In terms of assembly, homodimer.

The enzyme catalyses (6R)-5,10-methylene-5,6,7,8-tetrahydrofolate + NADP(+) = (6R)-5,10-methenyltetrahydrofolate + NADPH. It carries out the reaction (6R)-5,10-methenyltetrahydrofolate + H2O = (6R)-10-formyltetrahydrofolate + H(+). It participates in one-carbon metabolism; tetrahydrofolate interconversion. Its function is as follows. Catalyzes the oxidation of 5,10-methylenetetrahydrofolate to 5,10-methenyltetrahydrofolate and then the hydrolysis of 5,10-methenyltetrahydrofolate to 10-formyltetrahydrofolate. This is Bifunctional protein FolD from Methanoculleus marisnigri (strain ATCC 35101 / DSM 1498 / JR1).